A 310-amino-acid polypeptide reads, in one-letter code: Putative S-adenosyl-L-methionine-dependent methyltransferase MMAR_3534 (310 aa).

S-adenosyl-L-methionine contacts are provided by residues aspartate 131 and 160–161 (DL).

Belongs to the UPF0677 family.

Exhibits S-adenosyl-L-methionine-dependent methyltransferase activity. This Mycobacterium marinum (strain ATCC BAA-535 / M) protein is Putative S-adenosyl-L-methionine-dependent methyltransferase MMAR_3534.